We begin with the raw amino-acid sequence, 507 residues long: Maturase K (507 aa).

The protein belongs to the intron maturase 2 family. MatK subfamily.

The protein resides in the plastid. Its subcellular location is the chloroplast. Its function is as follows. Usually encoded in the trnK tRNA gene intron. Probably assists in splicing its own and other chloroplast group II introns. This Magnolia figo (Banana shrub) protein is Maturase K.